A 309-amino-acid polypeptide reads, in one-letter code: Low density lipoprotein receptor adapter protein 1-B (309 aa).

In terms of domain architecture, PID spans 41 to 195 (LLEGMLFHLK…SDGEGASSSQ (155 aa)). The interval 179–201 (DKREKSGSDGEGASSSQSDGSSS) is disordered. The segment covering 189–201 (EGASSSQSDGSSS) has biased composition (low complexity). Residues 213-217 (LLDFE) carry the Clathrin box motif. Residues 250-277 (WELDDGLDEAFARLAESRTNPQVLDIGL) are AP-2 complex binding. Positions 258–267 (EAFARLAESR) match the [DE]-X(1,2)-F-X-X-[FL]-X-X-X-R motif motif.

In terms of assembly, interacts (via PID domain) with ldlr (via NPXY motif). Binds to soluble clathrin trimers and to the adapter protein complex 2 (AP-2, beta 2 subunit). Binds to phosphoinositides, which regulate clathrin bud assembly at the cell surface. Interacts with the VLDL receptor (vldlr). Interacts with the vitellogenin receptor. Expressed at high level during oogenesis and embryogenesis. Found at low level in the adult liver and spleen. Found at very low level in testis and heart. Not found in the oocyte vegetal cortex.

The protein resides in the cytoplasm. Adapter protein (clathrin-associated sorting protein (CLASP)) required for efficient endocytosis of the LDL receptor (LDLR). Also involved in the vitellogenin receptor mediated endocytosis of nutrients during oogenesis. The sequence is that of Low density lipoprotein receptor adapter protein 1-B from Xenopus laevis (African clawed frog).